We begin with the raw amino-acid sequence, 185 residues long: ATP synthase subunit delta (185 aa).

The protein belongs to the ATPase delta chain family. As to quaternary structure, F-type ATPases have 2 components, F(1) - the catalytic core - and F(0) - the membrane proton channel. F(1) has five subunits: alpha(3), beta(3), gamma(1), delta(1), epsilon(1). F(0) has three main subunits: a(1), b(2) and c(10-14). The alpha and beta chains form an alternating ring which encloses part of the gamma chain. F(1) is attached to F(0) by a central stalk formed by the gamma and epsilon chains, while a peripheral stalk is formed by the delta and b chains.

The protein localises to the cell inner membrane. In terms of biological role, f(1)F(0) ATP synthase produces ATP from ADP in the presence of a proton or sodium gradient. F-type ATPases consist of two structural domains, F(1) containing the extramembraneous catalytic core and F(0) containing the membrane proton channel, linked together by a central stalk and a peripheral stalk. During catalysis, ATP synthesis in the catalytic domain of F(1) is coupled via a rotary mechanism of the central stalk subunits to proton translocation. Its function is as follows. This protein is part of the stalk that links CF(0) to CF(1). It either transmits conformational changes from CF(0) to CF(1) or is implicated in proton conduction. This Coxiella burnetii (strain CbuG_Q212) (Coxiella burnetii (strain Q212)) protein is ATP synthase subunit delta.